We begin with the raw amino-acid sequence, 183 residues long: MGIDINHKHDRKVRRTEVKSQDVYLRLLVKLYRYLARRTNSKFNTIILRRLFMSRINRPPLSLSRLARHMKKPTREGMIAVVVGTITNDVRLYKVPKMSVAALHVTEKARARILAAGGEILTFDQLALRAPTGAKTVLLQGRRNAREAVRHFGPAPGAPRSHTKPYVRTKGHERARPRRRSNV.

Residues 150–183 (RHFGPAPGAPRSHTKPYVRTKGHERARPRRRSNV) are disordered. Over residues 161–183 (SHTKPYVRTKGHERARPRRRSNV) the composition is skewed to basic residues.

This sequence belongs to the eukaryotic ribosomal protein eL18 family.

It localises to the cytoplasm. This chain is Large ribosomal subunit protein eL18 (RpL18), found in Spodoptera frugiperda (Fall armyworm).